The sequence spans 184 residues: Protein PLANT CADMIUM RESISTANCE 4 (184 aa).

A compositionally biased stretch (polar residues) spans 1–10 (MGRPGSQPNE). Positions 1–21 (MGRPGSQPNEAQPPPVQVQPT) are disordered. Residues 96 to 116 (GGLLYGMIFFIGVPFVYSCMF) traverse the membrane as a helical segment.

Belongs to the cornifelin family.

The protein localises to the membrane. Functionally, may be involved in heavy metals transport. This Arabidopsis thaliana (Mouse-ear cress) protein is Protein PLANT CADMIUM RESISTANCE 4 (PCR4).